The primary structure comprises 132 residues: Hydrogenase maturation factor HypA (132 aa).

His-2 is a binding site for Ni(2+). Zn(2+) is bound by residues Cys-74, Cys-77, Cys-91, and Cys-94.

It belongs to the HypA/HybF family.

Functionally, involved in the maturation of [NiFe] hydrogenases. Required for nickel insertion into the metal center of the hydrogenase. The chain is Hydrogenase maturation factor HypA from Synechococcus sp. (strain JA-2-3B'a(2-13)) (Cyanobacteria bacterium Yellowstone B-Prime).